The following is a 2496-amino-acid chain: Non-reducing polyketide synthase adrD (2496 aa).

The tract at residues 15-254 is N-terminal acylcarrier protein transacylase domain (SAT); it reads LVFGPQIAEI…HHASHITAVQ (240 aa). In terms of domain architecture, Ketosynthase family 3 (KS3) spans 387-808; that stretch reads ATPIAITGMG…GSNAALVVKQ (422 aa). Residues Cys552, His687, and His726 each act as for beta-ketoacyl synthase activity in the active site. A malonyl-CoA:ACP transacylase (MAT) domain region spans residues 914–1223; that stretch reads LCFGGQNGNE…QSLDLGGPQG (310 aa). Ser1001 functions as the For acyl/malonyl transferase activity in the catalytic mechanism. The tract at residues 1295 to 1423 is N-terminal hotdog fold; that stretch reads KEFVQLLTKQ…GEISLHPFGQ (129 aa). Residues 1295–1602 enclose the PKS/mFAS DH domain; it reads KEFVQLLTKQ…FTSVSIAGLA (308 aa). Residues 1296 to 1601 form a product template (PT) domain region; it reads EFVQLLTKQP…EFTSVSIAGL (306 aa). The active-site Proton acceptor; for dehydratase activity is the His1326. Positions 1451–1602 are C-terminal hotdog fold; that stretch reads ESSGLKGFAV…FTSVSIAGLA (152 aa). Asp1509 (proton donor; for dehydratase activity) is an active-site residue. Residues 1615–1629 are compositionally biased toward basic and acidic residues; sequence EKASPDLSLRNDSKV. Residues 1615 to 1645 form a disordered region; it reads EKASPDLSLRNDSKVDVNPTPQNTAPVVQPT. Residues 1633-1645 show a composition bias toward polar residues; the sequence is PTPQNTAPVVQPT. Residues 1652-1726 form the Carrier domain; that stretch reads PGYFVVVQEM…ALVQTIFPDA (75 aa). Ser1686 is subject to O-(pantetheine 4'-phosphoryl)serine. A methyltransferase (CMeT) domain region spans residues 1888–2121; that stretch reads QHRSEHHLLK…GFQWVDWTHN (234 aa). Positions 2151–2496 are thioesterase (TE) domain; that stretch reads RVMNEETVPY…YEFLRDHVRY (346 aa). Catalysis depends on for thioesterase activity residues Ser2274 and Asp2433.

The enzyme catalyses 3 malonyl-CoA + acetyl-CoA + 2 S-adenosyl-L-methionine = 3,5-dimethylorsellinate + 2 S-adenosyl-L-homocysteine + 3 CO2 + 4 CoA. It functions in the pathway secondary metabolite biosynthesis; terpenoid biosynthesis. Functionally, non-reducing polyketide synthase; part of the gene cluster that mediates the biosynthesis of andrastins, meroterpenoid compounds that exhibit inhibitory activity against ras farnesyltransferase, suggesting that they could be promising leads for antitumor agents. The first step of the pathway is the synthesis of 3,5-dimethylorsellinic acid (DMOA) by the polyketide synthase adrD via condensation of one acetyl-CoA starter unit with 3 malonyl-CoA units and 2 methylations. DMAO is then converted to farnesyl-DMAO by the prenyltransferase adrG. The methyltransferase adrK catalyzes the methylation of the carboxyl group of farnesyl-DMAO to farnesyl-DMAO methyl ester which is further converted to epoxyfarnesyl-DMAO methyl ester by the FAD-dependent monooxygenase adrH. The terpene cyclase adrI then catalyzes the carbon skeletal rearrangement to generate the andrastin E, the first compound in the pathway having the andrastin scaffold, with the tetracyclic ring system. The post-cyclization tailoring enzymes adrF, adrE, adrJ, and adrA, are involved in the conversion of andrastin E into andrastin A. The short chain dehydrogenase adrF is responsible for the oxidation of the C-3 a hydroxyl group of andrastin E to yield the corresponding ketone, andrastin D. The ketoreductase adrE stereoselectively reduces the carbonyl moiety to reverse the stereochemistry of the C-3 position to yield andrastin F. The acetyltransferase adrJ is the acetyltransferase that attaches the acetyl group to the C-3 hydroxyl group of andrastin F to yield andrastin C. Finally, the cytochrome P450 monooxygenase adrA catalyzes two sequential oxidation reactions of the C-23 methyl group, to generate the corresponding alcohol andrastin B, and aldehyde andrastin A. This Penicillium rubens (strain ATCC 28089 / DSM 1075 / NRRL 1951 / Wisconsin 54-1255) (Penicillium chrysogenum) protein is Non-reducing polyketide synthase adrD.